Here is a 481-residue protein sequence, read N- to C-terminus: MTQSTDPQGEKGLWGARFASGPATAMAALSKSTHFDFRLARYDLAGSRAHARVLHAAGLLDDDVLTALLAGLDALEADVVSGAFVPAEEDEDVHSALERALVERVGADVGGRLRAGRSRNDQIATLLRMFLRDHARVVAGLVLDVVEALLTQAAAHPGAAMPGRTHLQHAQPVLLGHHLMAHAWPLLRDVERLRDWDARAAVSPYGSGALAGSSLGLDPVAVARELGFTRSVENSIDGTASRDVAAEFAFVAAMIGVDLSRISEEVIAWATKEFSFVTLDDAWSTGSSIMPQKKNPDVAELARGKAGRLIGDLTGLLATLKGLPLAYNRDLQEDKEPVFDAVDTLEVLLPAVAGMVATLHFHTDRMASLAPQGFALATDIAEWLVRRGVPFRDAHRISGACVRRCEERAIAEGRGVELWDLTVEDLAAISPHLAPAVRDVLSTEGSLSSRDGIGGTAPVRVAEQLEAAQDALAAHLAWARP.

This sequence belongs to the lyase 1 family. Argininosuccinate lyase subfamily.

The protein localises to the cytoplasm. The catalysed reaction is 2-(N(omega)-L-arginino)succinate = fumarate + L-arginine. It functions in the pathway amino-acid biosynthesis; L-arginine biosynthesis; L-arginine from L-ornithine and carbamoyl phosphate: step 3/3. The polypeptide is Argininosuccinate lyase (Kineococcus radiotolerans (strain ATCC BAA-149 / DSM 14245 / SRS30216)).